The following is a 188-amino-acid chain: NAD(P)H-quinone oxidoreductase subunit J (188 aa).

A compositionally biased stretch (polar residues) spans Met-1–Ser-12. The disordered stretch occupies residues Met-1–Pro-23.

It belongs to the complex I 30 kDa subunit family. As to quaternary structure, NDH-1 can be composed of about 15 different subunits; different subcomplexes with different compositions have been identified which probably have different functions.

Its subcellular location is the cellular thylakoid membrane. It carries out the reaction a plastoquinone + NADH + (n+1) H(+)(in) = a plastoquinol + NAD(+) + n H(+)(out). The enzyme catalyses a plastoquinone + NADPH + (n+1) H(+)(in) = a plastoquinol + NADP(+) + n H(+)(out). NDH-1 shuttles electrons from an unknown electron donor, via FMN and iron-sulfur (Fe-S) centers, to quinones in the respiratory and/or the photosynthetic chain. The immediate electron acceptor for the enzyme in this species is believed to be plastoquinone. Couples the redox reaction to proton translocation, and thus conserves the redox energy in a proton gradient. Cyanobacterial NDH-1 also plays a role in inorganic carbon-concentration. The polypeptide is NAD(P)H-quinone oxidoreductase subunit J (Synechococcus sp. (strain CC9605)).